Consider the following 347-residue polypeptide: Photosystem II protein D1 (347 aa).

Helical transmembrane passes span 32–49, 121–136, and 145–159; these read YIGWFGILMFPLLVLATV, HFILGAGAYMGREWEF, and WIFVAFSAPLVAASA. His121 is a chlorophyll a binding site. Pheophytin a is bound at residue Tyr129. 2 residues coordinate [CaMn4O5] cluster: Asp173 and Glu192. Residues 200–221 form a helical membrane-spanning segment; sequence FHILGVAAVFGGSLFSAMHGSL. His201 contacts chlorophyll a. Residues His218 and 267–268 each bind a quinone; that span reads SF. A Fe cation-binding site is contributed by His218. His275 provides a ligand contact to Fe cation. A helical membrane pass occupies residues 277-291; it reads FLAAWPVIGIWFTAL. Residues His335, Glu336, Asp345, and Ala347 each contribute to the [CaMn4O5] cluster site.

The protein belongs to the reaction center PufL/M/PsbA/D family. As to quaternary structure, PSII is composed of 1 copy each of membrane proteins PsbA, PsbB, PsbC, PsbD, PsbE, PsbF, PsbH, PsbI, PsbJ, PsbK, PsbL, PsbM, PsbT, PsbX, PsbY, PsbZ, Psb30/Ycf12, at least 3 peripheral proteins of the oxygen-evolving complex and a large number of cofactors. It forms dimeric complexes. Requires The D1/D2 heterodimer binds P680, chlorophylls that are the primary electron donor of PSII, and subsequent electron acceptors. It shares a non-heme iron and each subunit binds pheophytin, quinone, additional chlorophylls, carotenoids and lipids. D1 provides most of the ligands for the Mn4-Ca-O5 cluster of the oxygen-evolving complex (OEC). There is also a Cl(-1) ion associated with D1 and D2, which is required for oxygen evolution. The PSII complex binds additional chlorophylls, carotenoids and specific lipids. as cofactor. In terms of processing, tyr-164 forms a radical intermediate that is referred to as redox-active TyrZ, YZ or Y-Z.

Its subcellular location is the plastid. It is found in the chloroplast thylakoid membrane. It catalyses the reaction 2 a plastoquinone + 4 hnu + 2 H2O = 2 a plastoquinol + O2. Functionally, photosystem II (PSII) is a light-driven water:plastoquinone oxidoreductase that uses light energy to abstract electrons from H(2)O, generating O(2) and a proton gradient subsequently used for ATP formation. It consists of a core antenna complex that captures photons, and an electron transfer chain that converts photonic excitation into a charge separation. The D1/D2 (PsbA/PsbD) reaction center heterodimer binds P680, the primary electron donor of PSII as well as several subsequent electron acceptors. In Heterocapsa niei (Dinoflagellate), this protein is Photosystem II protein D1.